Reading from the N-terminus, the 437-residue chain is GTPase Der (437 aa).

EngA-type G domains are found at residues 4–167 (PVVA…AEKD) and 175–352 (IRFS…DHQH). GTP is bound by residues 10 to 17 (GRPNVGKS), 57 to 61 (DTGGI), 119 to 122 (NKVD), 181 to 188 (GRPNVGKS), 229 to 233 (DTAGI), and 294 to 297 (NKWD). The KH-like domain maps to 353–437 (RRIQSAVLND…PIRLIKRRRK (85 aa)).

Belongs to the TRAFAC class TrmE-Era-EngA-EngB-Septin-like GTPase superfamily. EngA (Der) GTPase family. In terms of assembly, associates with the 50S ribosomal subunit.

In terms of biological role, GTPase that plays an essential role in the late steps of ribosome biogenesis. In Limosilactobacillus fermentum (strain NBRC 3956 / LMG 18251) (Lactobacillus fermentum), this protein is GTPase Der.